Reading from the N-terminus, the 507-residue chain is ATP synthase subunit alpha, chloroplastic (507 aa).

170–177 (GDRQTGKT) serves as a coordination point for ATP.

This sequence belongs to the ATPase alpha/beta chains family. As to quaternary structure, F-type ATPases have 2 components, CF(1) - the catalytic core - and CF(0) - the membrane proton channel. CF(1) has five subunits: alpha(3), beta(3), gamma(1), delta(1), epsilon(1). CF(0) has four main subunits: a, b, b' and c.

The protein resides in the plastid. It localises to the chloroplast thylakoid membrane. The enzyme catalyses ATP + H2O + 4 H(+)(in) = ADP + phosphate + 5 H(+)(out). Produces ATP from ADP in the presence of a proton gradient across the membrane. The alpha chain is a regulatory subunit. The polypeptide is ATP synthase subunit alpha, chloroplastic (Nandina domestica (Heavenly bamboo)).